Consider the following 282-residue polypeptide: MLIAHSIADLRSALASRGRPAFVPTMGNLHEGHLSLVRQARTLGDVTVASIFVNRLQFLPHEDFDSYPRTWEADRAQLEVAGCDILFAPREADLYPQAQTFKVQPDPLLADLLEGHFRPGFFTGVCTVVMKLFSAVFGTTGGGTALFGKKDYQQLMVIRRMVEQFALPVDIVAGDTCRAPDGLALSSRNGYLGPAERTKAVELARALRTLSDAALSRPVADWPGLEAAASDALRGQGWQPDYLVVRRRADLQRPDTAPRPGTLVALGAARLGSTRLIDNFEF.

M26 to H33 contributes to the ATP binding site. Catalysis depends on H33, which acts as the Proton donor. Position 57 (Q57) interacts with (R)-pantoate. Residue Q57 coordinates beta-alanine. An ATP-binding site is contributed by G148–D151. Q154 provides a ligand contact to (R)-pantoate. L185–R188 contacts ATP.

The protein belongs to the pantothenate synthetase family. In terms of assembly, homodimer.

The protein localises to the cytoplasm. The enzyme catalyses (R)-pantoate + beta-alanine + ATP = (R)-pantothenate + AMP + diphosphate + H(+). The protein operates within cofactor biosynthesis; (R)-pantothenate biosynthesis; (R)-pantothenate from (R)-pantoate and beta-alanine: step 1/1. Functionally, catalyzes the condensation of pantoate with beta-alanine in an ATP-dependent reaction via a pantoyl-adenylate intermediate. In Paracidovorax citrulli (strain AAC00-1) (Acidovorax citrulli), this protein is Pantothenate synthetase.